A 1321-amino-acid chain; its full sequence is Probable serine/threonine-protein kinase fnkE (1321 aa).

FNIP repeat units follow at residues 108–149 (YNQL…NLSS), 150–191 (YNQP…DLSS), 192–233 (YNKL…DLSS), and 255–296 (YNKL…DISS). One can recognise a Protein kinase 1 domain in the interval 295–595 (SSYNQLLTPG…YNYVIKDSIM (301 aa)). ATP is bound by residues 301-309 (LTPGTLSNN) and K325. D465 (proton acceptor) is an active-site residue. 2 FNIP repeats span residues 654-696 (FNHP…FNKF) and 741-783 (FNQP…LGSN). Residues 860 to 1128 (WEIISTLGSG…EGDSVFEKYL (269 aa)) enclose the Protein kinase 2 domain. Residues 866–874 (LGSGNFGKV) and K895 each bind ATP. D990 serves as the catalytic Proton acceptor. FNIP repeat units follow at residues 1160 to 1202 (YNQM…LGNE) and 1224 to 1268 (FNFT…LGSN).

This sequence belongs to the protein kinase superfamily. STE Ser/Thr protein kinase family. Mg(2+) serves as cofactor.

It carries out the reaction L-seryl-[protein] + ATP = O-phospho-L-seryl-[protein] + ADP + H(+). It catalyses the reaction L-threonyl-[protein] + ATP = O-phospho-L-threonyl-[protein] + ADP + H(+). In Dictyostelium discoideum (Social amoeba), this protein is Probable serine/threonine-protein kinase fnkE.